We begin with the raw amino-acid sequence, 324 residues long: 3'-5' exoribonuclease YhaM (324 aa).

The 117-residue stretch at 163 to 279 (HVVSMLELAK…LHYIDNLDAK (117 aa)) folds into the HD domain.

The protein belongs to the YhaM family.

In terms of biological role, shows a 3'-5' exoribonuclease activity. This is 3'-5' exoribonuclease YhaM from Geobacillus sp. (strain WCH70).